The primary structure comprises 309 residues: tRNA dimethylallyltransferase (309 aa).

11 to 18 provides a ligand contact to ATP; it reads GPTASGKS. Position 13–18 (13–18) interacts with substrate; that stretch reads TASGKS. 2 interaction with substrate tRNA regions span residues 36–39 and 160–164; these read DSMQ and QRLIR.

The protein belongs to the IPP transferase family. In terms of assembly, monomer. It depends on Mg(2+) as a cofactor.

The catalysed reaction is adenosine(37) in tRNA + dimethylallyl diphosphate = N(6)-dimethylallyladenosine(37) in tRNA + diphosphate. Catalyzes the transfer of a dimethylallyl group onto the adenine at position 37 in tRNAs that read codons beginning with uridine, leading to the formation of N6-(dimethylallyl)adenosine (i(6)A). This is tRNA dimethylallyltransferase from Rickettsia felis (strain ATCC VR-1525 / URRWXCal2) (Rickettsia azadi).